The primary structure comprises 383 residues: Putative transcription factor 282R (383 aa).

Belongs to the IIV-6 282R family.

Its function is as follows. Transcription activation. In Acheta domesticus (House cricket), this protein is Putative transcription factor 282R.